The chain runs to 104 residues: Large ribosomal subunit protein uL24 (104 aa).

Belongs to the universal ribosomal protein uL24 family. As to quaternary structure, part of the 50S ribosomal subunit.

Its function is as follows. One of two assembly initiator proteins, it binds directly to the 5'-end of the 23S rRNA, where it nucleates assembly of the 50S subunit. One of the proteins that surrounds the polypeptide exit tunnel on the outside of the subunit. The chain is Large ribosomal subunit protein uL24 from Flavobacterium psychrophilum (strain ATCC 49511 / DSM 21280 / CIP 103535 / JIP02/86).